A 750-amino-acid polypeptide reads, in one-letter code: tRNA-dihydrouridine(47) synthase [NAD(P)(+)] (750 aa).

The tract at residues 1-145 is disordered; that stretch reads MADEISNPVD…AKGQNKDRQF (145 aa). Basic and acidic residues-rich tracts occupy residues 17–28, 62–73, and 118–130; these read RPLEGEQLEEAH, SAKRVRIEEKNH, and EGKP…DNGG. C3H1-type zinc fingers lie at residues 155–179 and 200–221; these read CNSI…KCEH and CPVW…VGSH. The tract at residues 292-319 is disordered; it reads EVNRQSNLRKDQKNDQTEEEKQENRARY. FMN-binding positions include 343–345 and glutamine 419; that span reads PLT. Catalysis depends on cysteine 451, which acts as the Proton donor. FMN-binding positions include lysine 491, histidine 532, 591-593, and 615-616; these read NGD and AR.

The protein belongs to the Dus family. Dus3 subfamily. FMN is required as a cofactor.

Its subcellular location is the cytoplasm. The protein resides in the nucleus. The catalysed reaction is 5,6-dihydrouridine(47) in tRNA + NAD(+) = uridine(47) in tRNA + NADH + H(+). It carries out the reaction 5,6-dihydrouridine(47) in tRNA + NADP(+) = uridine(47) in tRNA + NADPH + H(+). It catalyses the reaction a 5,6-dihydrouridine in mRNA + NAD(+) = a uridine in mRNA + NADH + H(+). The enzyme catalyses a 5,6-dihydrouridine in mRNA + NADP(+) = a uridine in mRNA + NADPH + H(+). In terms of biological role, catalyzes the synthesis of dihydrouridine, a modified base found in the D-loop of most tRNAs. Specifically modifies U47 in cytoplasmic tRNAs. Catalyzes the synthesis of dihydrouridine in some mRNAs, thereby affecting their translation. The chain is tRNA-dihydrouridine(47) synthase [NAD(P)(+)] (dus3) from Botryotinia fuckeliana (strain B05.10) (Noble rot fungus).